Here is a 245-residue protein sequence, read N- to C-terminus: tRNA1(Val) (adenine(37)-N6)-methyltransferase (245 aa).

It belongs to the methyltransferase superfamily. tRNA (adenine-N(6)-)-methyltransferase family.

The protein localises to the cytoplasm. The catalysed reaction is adenosine(37) in tRNA1(Val) + S-adenosyl-L-methionine = N(6)-methyladenosine(37) in tRNA1(Val) + S-adenosyl-L-homocysteine + H(+). Functionally, specifically methylates the adenine in position 37 of tRNA(1)(Val) (anticodon cmo5UAC). The polypeptide is tRNA1(Val) (adenine(37)-N6)-methyltransferase (Klebsiella pneumoniae (strain 342)).